The sequence spans 422 residues: DNA-directed RNA polymerase III subunit RPC4 (422 aa).

4 disordered regions span residues 1–80, 115–190, 219–244, and 318–350; these read MSSN…GQQR, KSEG…DDEE, IQEA…GTGL, and RPAV…TKDA. The Nuclear localization signal motif lies at 25–29; sequence KPSLK. Over residues 28-37 the composition is skewed to basic residues; sequence LKFKPKAVAR. The span at 38 to 64 shows a compositional bias: basic and acidic residues; sequence KSKEEREAAASKVKLEEESKRGNDKKH. Ser-137 and Ser-138 each carry phosphoserine. Acidic residues predominate over residues 138-148; it reads SENEAEDDDNE. The span at 160–170 shows a compositional bias: basic and acidic residues; that stretch reads MGKEFEARNLI. 3 positions are modified to phosphoserine: Ser-178, Ser-182, and Ser-224. Positions 219–229 are enriched in basic and acidic residues; that stretch reads IQEALSEKPTR. Phosphothreonine occurs at positions 228 and 232.

The protein belongs to the eukaryotic RPC4/POLR3D RNA polymerase subunit family. As to quaternary structure, component of the RNA polymerase III (Pol III) complex consisting of 17 subunits. Interacts with RPC37/RPC5. RPC53/RPC4, RPC37/RPC5 and RPC11/RPC10 probably form a Pol III subcomplex.

The protein resides in the nucleus. Its function is as follows. DNA-dependent RNA polymerase catalyzes the transcription of DNA into RNA using the four ribonucleoside triphosphates as substrates. Specific peripheric component of RNA polymerase III which synthesizes small RNAs, such as 5S rRNA and tRNAs. Essential for tRNA synthesis. The RPC53/RPC4-RPC37/RPC5 subcomplex is required for terminator recognition and reinitiation. The protein is DNA-directed RNA polymerase III subunit RPC4 (RPC53) of Saccharomyces cerevisiae (strain ATCC 204508 / S288c) (Baker's yeast).